We begin with the raw amino-acid sequence, 646 residues long: Lipoteichoic acid synthase (646 aa).

At 1–7 (MSLPKKK) the chain is on the cytoplasmic side. Residues 8–28 (IGIFAFFLLTVFTITLKTYFS) form a helical membrane-spanning segment. Over 29–43 (YYVDFSLGVKGLVQN) the chain is Extracellular. The helical transmembrane segment at 44 to 64 (LILLMNPYSLIALVLSVFLFF) threads the bilayer. Topologically, residues 65–68 (KGKK) are cytoplasmic. The helical transmembrane segment at 69–89 (AFWFIFIGGFLLTFLLYANVV) threads the bilayer. Topologically, residues 90–119 (YFRFFSDFLTFSTLNQAGNVESMGGAVSAS) are extracellular. The chain crosses the membrane as a helical span at residues 120 to 140 (FKWYDFVYFIDTIIYLAILIF). Topologically, residues 141–153 (KRKWLDNRAFSKK) are cytoplasmic. The helical transmembrane segment at 154 to 174 (FVPVVMATSVALFFLNLAFAE) threads the bilayer. The Extracellular portion of the chain corresponds to 175–646 (TDRPELLTRT…KSGPKGNEKK (472 aa)). Residues Glu255 and Thr300 each coordinate Mn(2+). Thr300 is an active-site residue. His416 is a binding site for substrate. Residues Asp475 and His476 each coordinate Mn(2+).

It belongs to the LTA synthase family. Proteolytically cleaved.

The protein resides in the cell membrane. It is found in the secreted. The protein operates within cell wall biogenesis; lipoteichoic acid biosynthesis. Catalyzes the polymerization of lipoteichoic acid (LTA) polyglycerol phosphate, a reaction that presumably uses phosphatidylglycerol (PG) as substrate. Is required for staphylococcal growth and cell division process. The protein is Lipoteichoic acid synthase (ltaS) of Staphylococcus epidermidis (strain ATCC 35984 / DSM 28319 / BCRC 17069 / CCUG 31568 / BM 3577 / RP62A).